A 470-amino-acid chain; its full sequence is Argininosuccinate lyase (470 aa).

The protein belongs to the lyase 1 family. Argininosuccinate lyase subfamily.

The protein resides in the cytoplasm. It carries out the reaction 2-(N(omega)-L-arginino)succinate = fumarate + L-arginine. Its pathway is amino-acid biosynthesis; L-arginine biosynthesis; L-arginine from L-ornithine and carbamoyl phosphate: step 3/3. The sequence is that of Argininosuccinate lyase from Prochlorococcus marinus (strain MIT 9303).